The chain runs to 330 residues: Phosphate acyltransferase (330 aa).

This sequence belongs to the PlsX family. Homodimer. Probably interacts with PlsY.

Its subcellular location is the cytoplasm. It catalyses the reaction a fatty acyl-[ACP] + phosphate = an acyl phosphate + holo-[ACP]. The protein operates within lipid metabolism; phospholipid metabolism. In terms of biological role, catalyzes the reversible formation of acyl-phosphate (acyl-PO(4)) from acyl-[acyl-carrier-protein] (acyl-ACP). This enzyme utilizes acyl-ACP as fatty acyl donor, but not acyl-CoA. This Bacillus anthracis (strain A0248) protein is Phosphate acyltransferase.